The sequence spans 789 residues: Mediator of RNA polymerase II transcription subunit 15 (789 aa).

Residues 9–73 form an interaction with SREBF1 region; that stretch reads DWRSAAFRQK…IHFRDIHNKK (65 aa). Disordered stretches follow at residues 88 to 140 and 257 to 326; these read LTGG…APHG and QQQA…PLVS. Low complexity predominate over residues 89-102; it reads TGGPTPGAAGIGMP. A compositionally biased stretch (gly residues) spans 108–118; that stretch reads QSLGGMGGLGA. Composition is skewed to low complexity over residues 257–274, 282–291, and 302–326; these read QQQA…SMQQ, ALPQQLSQLH, and AQQS…PLVS. Asymmetric dimethylarginine is present on Arg-347. The disordered stretch occupies residues 404 to 531; sequence RFPPTSTMSA…PAGSSQAEEQ (128 aa). Positions 407 to 426 are enriched in polar residues; sequence PTSTMSAGPSSSISLGGQPT. Low complexity predominate over residues 427–450; it reads TQVSQSSLTMLSSPSPGQQVQTPQ. Positions 451-463 are enriched in pro residues; the sequence is SMPPPPQPSPQPG. Over residues 464–483 the composition is skewed to low complexity; the sequence is SQPNSNVSSGPAPSPSSFLP. Polar residues-rich tracts occupy residues 494-504 and 512-530; these read VTARTPQNFSV and TPVN…QAEE. A Nuclear localization signal motif is present at residues 548 to 565; it reads RRMINKIDKNEDRKKDLS. Position 604 is a phosphothreonine (Thr-604).

This sequence belongs to the Mediator complex subunit 15 family. As to quaternary structure, component of the Mediator complex, which is composed of MED1, MED4, MED6, MED7, MED8, MED9, MED10, MED11, MED12, MED13, MED13L, MED14, MED15, MED16, MED17, MED18, MED19, MED20, MED21, MED22, MED23, MED24, MED25, MED26, MED27, MED29, MED30, MED31, CCNC, CDK8 and CDC2L6/CDK11. The MED12, MED13, CCNC and CDK8 subunits form a distinct module termed the CDK8 module. Mediator containing the CDK8 module is less active than Mediator lacking this module in supporting transcriptional activation. Individual preparations of the Mediator complex lacking one or more distinct subunits have been variously termed ARC, CRSP, DRIP, PC2, SMCC and TRAP. Interacts with SMAD2, SMAD3, SREBF1 and SREBF2. Interacts with WWTR1. Interacts with TRIM11. Post-translationally, ubiquitinated by TRIM11, leading to proteasomal degradation.

It is found in the cytoplasm. Its subcellular location is the nucleus. Its function is as follows. Component of the Mediator complex, a coactivator involved in the regulated transcription of nearly all RNA polymerase II-dependent genes. Mediator functions as a bridge to convey information from gene-specific regulatory proteins to the basal RNA polymerase II transcription machinery. Mediator is recruited to promoters by direct interactions with regulatory proteins and serves as a scaffold for the assembly of a functional preinitiation complex with RNA polymerase II and the general transcription factors. Required for cholesterol-dependent gene regulation. Positively regulates the Nodal signaling pathway. This Mus musculus (Mouse) protein is Mediator of RNA polymerase II transcription subunit 15 (Med15).